Reading from the N-terminus, the 258-residue chain is Hydroxyacylglutathione hydrolase (258 aa).

Residues His-56, His-58, Asp-60, His-61, His-112, Asp-132, and His-170 each coordinate Zn(2+).

It belongs to the metallo-beta-lactamase superfamily. Glyoxalase II family. In terms of assembly, monomer. The cofactor is Zn(2+).

The catalysed reaction is an S-(2-hydroxyacyl)glutathione + H2O = a 2-hydroxy carboxylate + glutathione + H(+). The protein operates within secondary metabolite metabolism; methylglyoxal degradation; (R)-lactate from methylglyoxal: step 2/2. Its function is as follows. Thiolesterase that catalyzes the hydrolysis of S-D-lactoyl-glutathione to form glutathione and D-lactic acid. In Pseudomonas aeruginosa (strain ATCC 15692 / DSM 22644 / CIP 104116 / JCM 14847 / LMG 12228 / 1C / PRS 101 / PAO1), this protein is Hydroxyacylglutathione hydrolase.